The chain runs to 556 residues: Formate--tetrahydrofolate ligase (556 aa).

An ATP-binding site is contributed by 65–72; sequence TPAGEGKS.

It belongs to the formate--tetrahydrofolate ligase family.

The enzyme catalyses (6S)-5,6,7,8-tetrahydrofolate + formate + ATP = (6R)-10-formyltetrahydrofolate + ADP + phosphate. Its pathway is one-carbon metabolism; tetrahydrofolate interconversion. This chain is Formate--tetrahydrofolate ligase, found in Clostridium novyi (strain NT).